Here is a 554-residue protein sequence, read N- to C-terminus: Rab GTPase-binding effector protein 2 (554 aa).

Disordered stretches follow at residues 1 to 28, 167 to 208, and 371 to 395; these read MAAA…SELS, IQRR…GPAA, and GLRA…DEAL. A compositionally biased stretch (basic and acidic residues) spans 14–28; that stretch reads PQEKQKDASESSELS. Residues 15 to 173 are a coiled coil; the sequence is QEKQKDASES…IQEIQRRPRQ (159 aa). A phosphoserine mark is found at serine 176, serine 180, serine 187, and serine 191. Residues 274 to 509 adopt a coiled-coil conformation; the sequence is DSQWEQLQVE…QAELETSEQV (236 aa).

The protein belongs to the rabaptin family. In terms of assembly, heterodimer with RABGEF1. The dimer binds RAB5A that has been activated by GTP-binding. Interacts with SDCCAG8; this interaction is important for ciliogenesis regulation. Interacts with RAB4A; this interaction may mediate VEGFR2 cell surface expression.

The protein localises to the cytoplasm. It localises to the early endosome. Its subcellular location is the cytoskeleton. It is found in the microtubule organizing center. The protein resides in the centrosome. The protein localises to the cilium basal body. Its function is as follows. Plays a role in membrane trafficking and in homotypic early endosome fusion. Participates in arteriogenesis by regulating vascular endothelial growth factor receptor 2/VEGFR2 cell surface expression and endosomal trafficking. By interacting with SDCCAG8, localizes to centrosomes and plays a critical role in ciliogenesis. This chain is Rab GTPase-binding effector protein 2 (Rabep2), found in Mus musculus (Mouse).